The following is a 637-amino-acid chain: Multicopper oxidase LPR1 homolog 5 (637 aa).

An N-terminal signal peptide occupies residues 1 to 21 (MSPRIQQLAAVLLAAVVVVAA). N-linked (GlcNAc...) asparagine glycosylation is present at Asn100. His209 and His211 together coordinate Cu cation. N-linked (GlcNAc...) asparagine glycosylation is present at Asn234. Cu cation contacts are provided by His257 and His259. 6 N-linked (GlcNAc...) asparagine glycosylation sites follow: Asn308, Asn349, Asn357, Asn425, Asn482, and Asn516. In terms of domain architecture, Plastocyanin-like spans 334–406 (PYLSVQRRRY…IVDFSRLPAA (73 aa)). Residues His522, His525, and His527 each coordinate Cu cation. Asn553 is a glycosylation site (N-linked (GlcNAc...) asparagine). Cu cation contacts are provided by His618, Cys619, His620, His624, and Met629.

The protein belongs to the multicopper oxidase family. It depends on Cu cation as a cofactor. As to expression, highly expressed in roots and basal stems.

It is found in the endoplasmic reticulum membrane. In terms of biological role, multicopper oxidase that may play a role in the maintenance of inorganic phosphate homeostasis. The sequence is that of Multicopper oxidase LPR1 homolog 5 from Oryza sativa subsp. japonica (Rice).